Reading from the N-terminus, the 253-residue chain is Demethylmenaquinone methyltransferase (253 aa).

Residues threonine 75, aspartate 96, and aspartate 124–alanine 125 contribute to the S-adenosyl-L-methionine site.

It belongs to the class I-like SAM-binding methyltransferase superfamily. MenG/UbiE family.

It catalyses the reaction a 2-demethylmenaquinol + S-adenosyl-L-methionine = a menaquinol + S-adenosyl-L-homocysteine + H(+). Its pathway is quinol/quinone metabolism; menaquinone biosynthesis; menaquinol from 1,4-dihydroxy-2-naphthoate: step 2/2. Methyltransferase required for the conversion of demethylmenaquinol (DMKH2) to menaquinol (MKH2). This chain is Demethylmenaquinone methyltransferase, found in Desulfitobacterium hafniense (strain Y51).